A 228-amino-acid polypeptide reads, in one-letter code: Protein CWC15 homolog A (228 aa).

Positions 1–126 (MTTAARPTFE…DEDSDDDTAA (126 aa)) are disordered. Residues 24 to 34 (SQLSKQYSSRD) are compositionally biased toward polar residues. Residues 52 to 84 (EEVRSRDFRRELEERERVVARDKNRDRPTREHT) show a composition bias toward basic and acidic residues. The segment covering 102–124 (DADDPLTDEDGDEDSDEDSDDDT) has biased composition (acidic residues). Positions 121–165 (DDDTAALLAELEKIKKERAEEKDRKELEQKAEEERIRMENILSGN) form a coiled coil.

It belongs to the CWC15 family. As to quaternary structure, identified in the spliceosome C complex. Component of the minor spliceosome, which splices U12-type introns.

It localises to the nucleus. Involved in pre-mRNA splicing as component of the spliceosome. This chain is Protein CWC15 homolog A (cwc15-a), found in Xenopus laevis (African clawed frog).